Here is a 462-residue protein sequence, read N- to C-terminus: Trigger factor (462 aa).

Residues T163–P259 form the PPIase FKBP-type domain. The segment at S439–P462 is disordered. The span at Q448–P462 shows a compositional bias: low complexity.

The protein belongs to the FKBP-type PPIase family. Tig subfamily.

Its subcellular location is the cytoplasm. The catalysed reaction is [protein]-peptidylproline (omega=180) = [protein]-peptidylproline (omega=0). Functionally, involved in protein export. Acts as a chaperone by maintaining the newly synthesized protein in an open conformation. Functions as a peptidyl-prolyl cis-trans isomerase. In Salinibacter ruber (strain DSM 13855 / M31), this protein is Trigger factor.